The chain runs to 108 residues: uncharacterized protein (108 aa).

The chain crosses the membrane as a helical span at residues 64–84; that stretch reads LFIIYYYYYLLICLSPHFFPI.

The protein localises to the membrane. This is an uncharacterized protein from Schizosaccharomyces pombe (strain 972 / ATCC 24843) (Fission yeast).